A 208-amino-acid chain; its full sequence is RNA-binding protein KhpB (208 aa).

Positions 5 to 55 (TAAGRNVDEAVQSGLQELGLTKDKVEITVIEEGNKGFLGIFGKKPAIVKLV) are jag_N domain. In terms of domain architecture, KH spans 58-135 (IDPIQQAKLY…GQYKNVTVDA (78 aa)). The 69-residue stretch at 140 to 208 (LKRKETLSQL…NRHLVISHKR (69 aa)) folds into the R3H domain.

It belongs to the KhpB RNA-binding protein family. Forms a complex with KhpA.

Its subcellular location is the cytoplasm. In terms of biological role, a probable RNA chaperone. Forms a complex with KhpA which binds to cellular RNA and controls its expression. Plays a role in peptidoglycan (PG) homeostasis and cell length regulation. The polypeptide is RNA-binding protein KhpB (Bacillus subtilis (strain 168)).